A 385-amino-acid chain; its full sequence is 8-amino-7-oxononanoate synthase (385 aa).

Arginine 21 contacts substrate. 108–109 (GF) is a binding site for pyridoxal 5'-phosphate. Position 133 (histidine 133) interacts with substrate. 3 residues coordinate pyridoxal 5'-phosphate: serine 179, histidine 207, and threonine 233. Lysine 236 is subject to N6-(pyridoxal phosphate)lysine. Residue threonine 352 participates in substrate binding.

This sequence belongs to the class-II pyridoxal-phosphate-dependent aminotransferase family. BioF subfamily. In terms of assembly, homodimer. The cofactor is pyridoxal 5'-phosphate.

The enzyme catalyses 6-carboxyhexanoyl-[ACP] + L-alanine + H(+) = (8S)-8-amino-7-oxononanoate + holo-[ACP] + CO2. It functions in the pathway cofactor biosynthesis; biotin biosynthesis. In terms of biological role, catalyzes the decarboxylative condensation of pimeloyl-[acyl-carrier protein] and L-alanine to produce 8-amino-7-oxononanoate (AON), [acyl-carrier protein], and carbon dioxide. The protein is 8-amino-7-oxononanoate synthase of Salmonella typhimurium (strain LT2 / SGSC1412 / ATCC 700720).